The primary structure comprises 498 residues: MEKYILSIDQGTTSSRAILFNQKGEIAGVAQREFKQYFPQSGWVEHDANEIWTSVLAVMTEVINENDVRADQIAGIGITNQRETTVVWDKHTGRPIYHAIVWQSRQTQSICSELKQQGYEQTFRDKTGLLLDPYFAGTKVKWILDNVEGAREKAENGDLLFGTIDTWLVWKLSGKAAHITDYSNASRTLMFNIHDLEWDDELLELLTVPKNMLPEVKPSSEVYGKTIDYHFYGQEVPIAGVAGDQQAALFGQACFERGDVKNTYGTGGFMLMNTGDKAVKSESGLLTTIAYGIDGKVNYALEGSIFVSGSAIQWLRDGLRMINSAPQSESYATRVDSTEGVYVVPAFVGLGTPYWDSEARGAIFGLSRGTEKEHFIRATIESLCYQTRDVMEAMSKDSGIDVQSLRVDGGAVKNNFIMQFQADIVNTSVERPEIQETTALGAAFLAGLAVGFWESKDDIAKNWKLEEKFDPKMDEGEREKLYRGWKKAVEATQVFKTE.

T12 provides a ligand contact to ADP. Residues T12, T13, and S14 each coordinate ATP. Residue T12 participates in sn-glycerol 3-phosphate binding. An ADP-binding site is contributed by R16. Positions 82, 83, and 134 each coordinate sn-glycerol 3-phosphate. Residues R82, E83, and Y134 each contribute to the glycerol site. H230 carries the post-translational modification Phosphohistidine; by HPr. D244 provides a ligand contact to sn-glycerol 3-phosphate. 2 residues coordinate glycerol: D244 and Q245. 2 residues coordinate ADP: T266 and G309. ATP-binding residues include T266, G309, Q313, and G410. ADP-binding residues include G410 and N414.

This sequence belongs to the FGGY kinase family. Homotetramer and homodimer (in equilibrium). Post-translationally, the phosphoenolpyruvate-dependent sugar phosphotransferase system (PTS), including enzyme I, and histidine-containing protein (HPr) are required for the phosphorylation, which leads to the activation of the enzyme.

The enzyme catalyses glycerol + ATP = sn-glycerol 3-phosphate + ADP + H(+). It participates in polyol metabolism; glycerol degradation via glycerol kinase pathway; sn-glycerol 3-phosphate from glycerol: step 1/1. Activated by phosphorylation and inhibited by fructose 1,6-bisphosphate (FBP). Functionally, key enzyme in the regulation of glycerol uptake and metabolism. Catalyzes the phosphorylation of glycerol to yield sn-glycerol 3-phosphate. This Staphylococcus aureus (strain MSSA476) protein is Glycerol kinase.